A 193-amino-acid polypeptide reads, in one-letter code: Putative deoxynucleotide monophosphate kinase (193 aa).

Lysine 10 contributes to the dGMP binding site. Residues glycine 13 and threonine 16 each coordinate ATP. Leucine 36, lysine 37, lysine 58, aspartate 122, arginine 124, glutamate 128, and serine 155 together coordinate dGMP.

It belongs to the dNMP kinase family.

It catalyses the reaction a 2'-deoxyribonucleoside 5'-phosphate + ATP = a 2'-deoxyribonucleoside 5'-diphosphate + ADP. The protein is Putative deoxynucleotide monophosphate kinase of Acanthamoeba polyphaga mimivirus (APMV).